A 427-amino-acid chain; its full sequence is Enolase (427 aa).

Position 163 (Gln163) interacts with (2R)-2-phosphoglycerate. Glu205 serves as the catalytic Proton donor. Asp242, Glu285, and Asp312 together coordinate Mg(2+). 4 residues coordinate (2R)-2-phosphoglycerate: Lys337, Arg366, Ser367, and Lys388. Catalysis depends on Lys337, which acts as the Proton acceptor.

The protein belongs to the enolase family. The cofactor is Mg(2+).

The protein resides in the cytoplasm. It is found in the secreted. The protein localises to the cell surface. The enzyme catalyses (2R)-2-phosphoglycerate = phosphoenolpyruvate + H2O. Its pathway is carbohydrate degradation; glycolysis; pyruvate from D-glyceraldehyde 3-phosphate: step 4/5. Functionally, catalyzes the reversible conversion of 2-phosphoglycerate (2-PG) into phosphoenolpyruvate (PEP). It is essential for the degradation of carbohydrates via glycolysis. This is Enolase from Azorhizobium caulinodans (strain ATCC 43989 / DSM 5975 / JCM 20966 / LMG 6465 / NBRC 14845 / NCIMB 13405 / ORS 571).